Here is a 64-residue protein sequence, read N- to C-terminus: DNA gyrase inhibitor YacG (64 aa).

Residues C10, C13, C29, and C33 each contribute to the Zn(2+) site.

It belongs to the DNA gyrase inhibitor YacG family. In terms of assembly, interacts with GyrB. Requires Zn(2+) as cofactor.

Its function is as follows. Inhibits all the catalytic activities of DNA gyrase by preventing its interaction with DNA. Acts by binding directly to the C-terminal domain of GyrB, which probably disrupts DNA binding by the gyrase. The polypeptide is DNA gyrase inhibitor YacG (Pectobacterium carotovorum subsp. carotovorum (strain PC1)).